The primary structure comprises 342 residues: Anthranilate phosphoribosyltransferase (342 aa).

5-phospho-alpha-D-ribose 1-diphosphate-binding positions include G84, 87 to 88, T92, 94 to 97, 112 to 120, and S124; these read GD, NIST, and KHGNRGVSS. G84 serves as a coordination point for anthranilate. S96 lines the Mg(2+) pocket. N115 is an anthranilate binding site. Residue R170 coordinates anthranilate. Mg(2+) contacts are provided by D229 and E230.

This sequence belongs to the anthranilate phosphoribosyltransferase family. In terms of assembly, homodimer. Mg(2+) serves as cofactor.

The catalysed reaction is N-(5-phospho-beta-D-ribosyl)anthranilate + diphosphate = 5-phospho-alpha-D-ribose 1-diphosphate + anthranilate. It functions in the pathway amino-acid biosynthesis; L-tryptophan biosynthesis; L-tryptophan from chorismate: step 2/5. In terms of biological role, catalyzes the transfer of the phosphoribosyl group of 5-phosphorylribose-1-pyrophosphate (PRPP) to anthranilate to yield N-(5'-phosphoribosyl)-anthranilate (PRA). The polypeptide is Anthranilate phosphoribosyltransferase (Cupriavidus metallidurans (strain ATCC 43123 / DSM 2839 / NBRC 102507 / CH34) (Ralstonia metallidurans)).